The chain runs to 232 residues: Aspartate racemase (232 aa).

Position 49–51 (49–51) interacts with substrate; it reads DRT. Cys84 functions as the Proton donor/acceptor in the catalytic mechanism. Residues 85-87 and Lys166 contribute to the substrate site; that span reads NTA. The active-site Proton donor/acceptor is the Cys195.

It belongs to the aspartate/glutamate racemases family.

The catalysed reaction is L-aspartate = D-aspartate. The sequence is that of Aspartate racemase from Thermococcus sp. (strain KS-8).